Reading from the N-terminus, the 1597-residue chain is Pentafunctional AROM polypeptide (1597 aa).

A 3-dehydroquinate synthase region spans residues Met-1–Asn-384. NAD(+)-binding positions include Asp-44–Asn-46, Glu-81–Lys-84, Gly-114–Val-116, and Asp-119. Position 130 (Arg-130) interacts with 7-phospho-2-dehydro-3-deoxy-D-arabino-heptonate. Residue Thr-139–Thr-140 coordinates NAD(+). 7-phospho-2-dehydro-3-deoxy-D-arabino-heptonate is bound by residues Asp-146 and Lys-152. An NAD(+)-binding site is contributed by Lys-161. Asn-162 contributes to the 7-phospho-2-dehydro-3-deoxy-D-arabino-heptonate binding site. Residues Phe-179–Thr-182 and Asn-190 contribute to the NAD(+) site. A Zn(2+)-binding site is contributed by Glu-194. Residues Glu-194–Lys-197 and Lys-250 each bind 7-phospho-2-dehydro-3-deoxy-D-arabino-heptonate. Glu-260 (proton acceptor; for 3-dehydroquinate synthase activity) is an active-site residue. 7-phospho-2-dehydro-3-deoxy-D-arabino-heptonate contacts are provided by residues Arg-264 to Asn-268 and His-271. A Zn(2+)-binding site is contributed by His-271. His-275 (proton acceptor; for 3-dehydroquinate synthase activity) is an active-site residue. 7-phospho-2-dehydro-3-deoxy-D-arabino-heptonate contacts are provided by His-287 and Lys-356. His-287 contributes to the Zn(2+) binding site. Residues Val-397–Val-842 are EPSP synthase. Cys-824 acts as the For EPSP synthase activity in catalysis. The segment at Ala-866–Ser-1057 is shikimate kinase. An ATP-binding site is contributed by Gly-872–Thr-879. A 3-dehydroquinase region spans residues Leu-1058 to Glu-1278. Catalysis depends on His-1181, which acts as the Proton acceptor; for 3-dehydroquinate dehydratase activity. Lys-1209 functions as the Schiff-base intermediate with substrate; for 3-dehydroquinate dehydratase activity in the catalytic mechanism. The segment at Ser-1291–Thr-1597 is shikimate dehydrogenase.

In the N-terminal section; belongs to the sugar phosphate cyclases superfamily. Dehydroquinate synthase family. The protein in the 2nd section; belongs to the EPSP synthase family. This sequence in the 3rd section; belongs to the shikimate kinase family. It in the 4th section; belongs to the type-I 3-dehydroquinase family. In the C-terminal section; belongs to the shikimate dehydrogenase family. In terms of assembly, homodimer. The cofactor is Zn(2+).

The protein localises to the cytoplasm. It carries out the reaction 7-phospho-2-dehydro-3-deoxy-D-arabino-heptonate = 3-dehydroquinate + phosphate. It catalyses the reaction 3-dehydroquinate = 3-dehydroshikimate + H2O. The catalysed reaction is shikimate + NADP(+) = 3-dehydroshikimate + NADPH + H(+). The enzyme catalyses shikimate + ATP = 3-phosphoshikimate + ADP + H(+). It carries out the reaction 3-phosphoshikimate + phosphoenolpyruvate = 5-O-(1-carboxyvinyl)-3-phosphoshikimate + phosphate. The protein operates within metabolic intermediate biosynthesis; chorismate biosynthesis; chorismate from D-erythrose 4-phosphate and phosphoenolpyruvate: step 2/7. It functions in the pathway metabolic intermediate biosynthesis; chorismate biosynthesis; chorismate from D-erythrose 4-phosphate and phosphoenolpyruvate: step 3/7. Its pathway is metabolic intermediate biosynthesis; chorismate biosynthesis; chorismate from D-erythrose 4-phosphate and phosphoenolpyruvate: step 4/7. It participates in metabolic intermediate biosynthesis; chorismate biosynthesis; chorismate from D-erythrose 4-phosphate and phosphoenolpyruvate: step 5/7. The protein operates within metabolic intermediate biosynthesis; chorismate biosynthesis; chorismate from D-erythrose 4-phosphate and phosphoenolpyruvate: step 6/7. In terms of biological role, the AROM polypeptide catalyzes 5 consecutive enzymatic reactions in prechorismate polyaromatic amino acid biosynthesis. In Ajellomyces dermatitidis (strain ER-3 / ATCC MYA-2586) (Blastomyces dermatitidis), this protein is Pentafunctional AROM polypeptide.